The chain runs to 687 residues: Polyphosphate kinase (687 aa).

An ATP-binding site is contributed by Asn-45. Arg-375 and Arg-405 together coordinate Mg(2+). The Phosphohistidine intermediate role is filled by His-435. ATP-binding residues include Tyr-472, Arg-568, and His-596.

The protein belongs to the polyphosphate kinase 1 (PPK1) family. The cofactor is Mg(2+). Post-translationally, an intermediate of this reaction is the autophosphorylated ppk in which a phosphate is covalently linked to a histidine residue through a N-P bond.

It carries out the reaction [phosphate](n) + ATP = [phosphate](n+1) + ADP. Functionally, catalyzes the reversible transfer of the terminal phosphate of ATP to form a long-chain polyphosphate (polyP). The polypeptide is Polyphosphate kinase (Burkholderia ambifaria (strain ATCC BAA-244 / DSM 16087 / CCUG 44356 / LMG 19182 / AMMD) (Burkholderia cepacia (strain AMMD))).